The sequence spans 101 residues: Anti-lipopolysaccharide factor (101 aa).

Cysteine 31 and cysteine 52 form a disulfide bridge.

Its function is as follows. Binds tightly to LPS and thus specifically inhibits the LPS-mediated activation of the hemolymph coagulation. It has a strong antibacterial effect especially on the growth of Gram-negative bacteria. In Limulus polyphemus (Atlantic horseshoe crab), this protein is Anti-lipopolysaccharide factor.